The primary structure comprises 156 residues: Beta-defensin 125 (156 aa).

Residues 1-20 form the signal peptide; sequence MNILMLTFIICGLLTRVTKG. Cystine bridges form between Cys-27/Cys-55, Cys-35/Cys-49, and Cys-39/Cys-56. Positions 68–156 are excised as a propeptide; it reads PAFPVIHLED…PPSQTALTHN (89 aa). Residues 108 to 156 are disordered; sequence GETMTPETNTPETTMPPSEATTPETTMPPSETATSETMPPPSQTALTHN. A compositionally biased stretch (low complexity) spans 109–144; it reads ETMTPETNTPETTMPPSEATTPETTMPPSETATSET.

This sequence belongs to the beta-defensin family.

It localises to the secreted. Functionally, has antibacterial activity. This chain is Beta-defensin 125 (DEFB125), found in Homo sapiens (Human).